Reading from the N-terminus, the 140-residue chain is Lysozyme D (140 aa).

Residues 1-18 (MKAFIVLVALACAAPAFG) form the signal peptide. A C-type lysozyme domain is found at 19-140 (RTMDRCSLAR…GWLPSIDDCF (122 aa)). Disulfide bonds link C24/C139, C45/C129, C80/C96, and C92/C110. Catalysis depends on residues E50 and D68.

This sequence belongs to the glycosyl hydrolase 22 family. In terms of tissue distribution, found in the midgut.

The enzyme catalyses Hydrolysis of (1-&gt;4)-beta-linkages between N-acetylmuramic acid and N-acetyl-D-glucosamine residues in a peptidoglycan and between N-acetyl-D-glucosamine residues in chitodextrins.. In terms of biological role, unlikely to play an active role in the humoral immune defense. May have a function in the digestion of bacteria in the food. The chain is Lysozyme D (LysD) from Drosophila melanogaster (Fruit fly).